A 266-amino-acid chain; its full sequence is Undecaprenyl-diphosphatase (266 aa).

A run of 8 helical transmembrane segments spans residues 1-21 (MDIF…FLPI), 39-59 (QGLT…VIYF), 87-107 (WWII…KDFI), 114-134 (IEVI…ADKL), 144-164 (VGWK…IPGT), 184-204 (AARF…ILVV), 218-238 (ALVL…HYFL), and 246-266 (MTPF…VIFA).

It belongs to the UppP family.

The protein localises to the cell inner membrane. The catalysed reaction is di-trans,octa-cis-undecaprenyl diphosphate + H2O = di-trans,octa-cis-undecaprenyl phosphate + phosphate + H(+). Its function is as follows. Catalyzes the dephosphorylation of undecaprenyl diphosphate (UPP). Confers resistance to bacitracin. This chain is Undecaprenyl-diphosphatase, found in Shewanella loihica (strain ATCC BAA-1088 / PV-4).